The chain runs to 339 residues: Deoxyhypusine hydroxylase (339 aa).

HEAT-like PBS-type repeat units lie at residues 71–97 (LKHELAYCLGQTRNPDAVSYLLEVVKN) and 104–130 (CRHEAAEGLGALGFDTSLDVLKALRDD). Positions 73, 74, 106, and 107 each coordinate Fe cation. The tract at residues 159–183 (EKLKPSDFTSIDPAPPLPMASSQPS) is disordered. HEAT-like PBS-type repeat units follow at residues 200 to 233 (QRYRAMFALRDLASPPDLPTAVEAVEALAKGLKD), 238 to 264 (FRHEVAFVFGQLCHPASVPSLTETLSD), and 271 to 298 (VRHEAAEALGSLGDVEGVEDTLKKFLND). Residues histidine 240, glutamate 241, histidine 273, and glutamate 274 each contribute to the Fe cation site.

This sequence belongs to the deoxyhypusine hydroxylase family. Requires Fe(2+) as cofactor.

The protein resides in the cytoplasm. Its subcellular location is the nucleus. The catalysed reaction is [eIF5A protein]-deoxyhypusine + AH2 + O2 = [eIF5A protein]-hypusine + A + H2O. It functions in the pathway protein modification; eIF5A hypusination. Catalyzes the hydroxylation of the N(6)-(4-aminobutyl)-L-lysine intermediate to form hypusine, an essential post-translational modification only found in mature eIF-5A factor. The chain is Deoxyhypusine hydroxylase (lia1) from Aspergillus oryzae (strain ATCC 42149 / RIB 40) (Yellow koji mold).